Reading from the N-terminus, the 81-residue chain is Small ribosomal subunit protein eS21 (81 aa).

This sequence belongs to the eukaryotic ribosomal protein eS21 family. As to quaternary structure, component of the 40S small ribosomal subunit.

Its subcellular location is the cytoplasm. It localises to the cytosol. It is found in the rough endoplasmic reticulum. Component of the small ribosomal subunit. The ribosome is a large ribonucleoprotein complex responsible for the synthesis of proteins in the cell. This is Small ribosomal subunit protein eS21 (rps21) from Danio rerio (Zebrafish).